Here is a 331-residue protein sequence, read N- to C-terminus: DNA-directed RNA polymerase subunit alpha (331 aa).

The tract at residues 1–237 (MQSSVTEFLI…NQLESFVYLR (237 aa)) is alpha N-terminal domain (alpha-NTD). The interval 251–331 (FDPILLRPVD…NWPPDNILDN (81 aa)) is alpha C-terminal domain (alpha-CTD).

Belongs to the RNA polymerase alpha chain family. As to quaternary structure, homodimer. The RNAP catalytic core consists of 2 alpha, 1 beta, 1 beta' and 1 omega subunit. When a sigma factor is associated with the core the holoenzyme is formed, which can initiate transcription.

The catalysed reaction is RNA(n) + a ribonucleoside 5'-triphosphate = RNA(n+1) + diphosphate. In terms of biological role, DNA-dependent RNA polymerase catalyzes the transcription of DNA into RNA using the four ribonucleoside triphosphates as substrates. This Buchnera aphidicola subsp. Baizongia pistaciae (strain Bp) protein is DNA-directed RNA polymerase subunit alpha.